The following is a 401-amino-acid chain: Imidazolonepropionase (401 aa).

Fe(3+) is bound by residues His-70 and His-72. His-70 and His-72 together coordinate Zn(2+). The 4-imidazolone-5-propanoate site is built by Arg-79, Tyr-142, and His-175. Tyr-142 serves as a coordination point for N-formimidoyl-L-glutamate. His-238 serves as a coordination point for Fe(3+). His-238 is a binding site for Zn(2+). Gln-241 serves as a coordination point for 4-imidazolone-5-propanoate. Asp-313 contributes to the Fe(3+) binding site. Asp-313 lines the Zn(2+) pocket. N-formimidoyl-L-glutamate is bound by residues Asn-315 and Gly-317. A 4-imidazolone-5-propanoate-binding site is contributed by Thr-318.

The protein belongs to the metallo-dependent hydrolases superfamily. HutI family. Zn(2+) is required as a cofactor. The cofactor is Fe(3+).

It is found in the cytoplasm. It catalyses the reaction 4-imidazolone-5-propanoate + H2O = N-formimidoyl-L-glutamate. It functions in the pathway amino-acid degradation; L-histidine degradation into L-glutamate; N-formimidoyl-L-glutamate from L-histidine: step 3/3. In terms of biological role, catalyzes the hydrolytic cleavage of the carbon-nitrogen bond in imidazolone-5-propanoate to yield N-formimidoyl-L-glutamate. It is the third step in the universal histidine degradation pathway. In Xanthomonas euvesicatoria pv. vesicatoria (strain 85-10) (Xanthomonas campestris pv. vesicatoria), this protein is Imidazolonepropionase.